We begin with the raw amino-acid sequence, 368 residues long: MVQAPLSPSLLQTQSISQPPQETEALKAWLEELTQKIIEGDRINKSEALTLTQIEGQDSILLLCEAADRIRQACCGNVVDLCSIINIKSGNCSENCRFCSQSVYHPGENSPIYGLKSSEEILAQAKAAEAAGAKRFCLVSQGRGPKYQGAKSKEFEQILATVRQIAAETSIKPCCALGEVTPEQAQALREAGVTRYNHNLEASEGFYPEIVTSHSWRDRVETIKNLKAAGIQACSGGIMGMGETWEDRVDLALALRELGVESVPINLLNPREGTPLGDCHRLDPFEALKAIAIFRLILPQQILRYAGGREAIMGDLQSLGLKSGINAMLIGHYLTTLGQPPEKDLAMVESLGLQGGEAPIPGEYQTRS.

The Radical SAM core domain occupies 74–309 (CCGNVVDLCS…QQILRYAGGR (236 aa)). 3 residues coordinate [4Fe-4S] cluster: C92, C96, and C99. [2Fe-2S] cluster-binding residues include C137, C174, C234, and R304.

This sequence belongs to the radical SAM superfamily. Biotin synthase family. As to quaternary structure, homodimer. [4Fe-4S] cluster serves as cofactor. [2Fe-2S] cluster is required as a cofactor.

The enzyme catalyses (4R,5S)-dethiobiotin + (sulfur carrier)-SH + 2 reduced [2Fe-2S]-[ferredoxin] + 2 S-adenosyl-L-methionine = (sulfur carrier)-H + biotin + 2 5'-deoxyadenosine + 2 L-methionine + 2 oxidized [2Fe-2S]-[ferredoxin]. It functions in the pathway cofactor biosynthesis; biotin biosynthesis; biotin from 7,8-diaminononanoate: step 2/2. Catalyzes the conversion of dethiobiotin (DTB) to biotin by the insertion of a sulfur atom into dethiobiotin via a radical-based mechanism. The sequence is that of Biotin synthase from Rippkaea orientalis (strain PCC 8801 / RF-1) (Cyanothece sp. (strain PCC 8801)).